An 801-amino-acid polypeptide reads, in one-letter code: N,N'-diacetylchitobiose phosphorylase (801 aa).

N-acetyl-alpha-D-glucosamine 1-phosphate contacts are provided by Arg333, Arg343, Arg349, Asp350, Trp490, and Asp492. Asp492 serves as the catalytic Proton donor. The N-acetyl-D-glucosamine site is built by Asp492, Lys636, and Glu637. Positions 637, 644, 690, 709, and 710 each coordinate N-acetyl-alpha-D-glucosamine 1-phosphate.

Belongs to the glycosyl hydrolase 94 family. As to quaternary structure, homodimer.

The enzyme catalyses N,N'-diacetylchitobiose + phosphate = N-acetyl-alpha-D-glucosamine 1-phosphate + N-acetyl-D-glucosamine. Functionally, catalyzes the reversible phosphorolysis of chitobiose (N,N'-diacetylchitobiose or (GlcNAc)(2)) into N-acetyl-alpha-D-glucosamine 1-phosphate (GlcNAc-1-P) and N-acetyl-D-glucosamine (GlcNAc) with inversion of the anomeric configuration. In the synthetic reaction, is also active on glucose-1-phosphate with 10% activity as compared with that on GlcNAc-1-P. GlcNAc is the best acceptor substrate, but the enzyme can use aryl-beta-glycosides of GlcNAc as the acceptor substrate with 10-20% activities of GlcNAc. Shows no phosphorolytic activity on cellobiose. The chain is N,N'-diacetylchitobiose phosphorylase from Vibrio proteolyticus (Aeromonas proteolytica).